A 182-amino-acid polypeptide reads, in one-letter code: UPF0397 protein BCAH820_2657 (182 aa).

Transmembrane regions (helical) follow at residues 9–29, 40–60, 71–91, 114–134, and 142–162; these read VVAIGIGSALYGILGLWGFTI, AILTVFGALFGPVAGLLIGLI, WGIWWGWVISSGIIGFTMGFI, ITGLIGIVIAIIFAGAFDIIV, and IVIQVLGATIADVIVFLVLGL.

Belongs to the UPF0397 family.

The protein resides in the cell membrane. In Bacillus cereus (strain AH820), this protein is UPF0397 protein BCAH820_2657.